Reading from the N-terminus, the 414-residue chain is Serine--tRNA ligase (414 aa).

Residue 230 to 232 (TSE) coordinates L-serine. 261 to 263 (RQE) contacts ATP. L-serine is bound at residue E284. An ATP-binding site is contributed by 348–351 (EISS). S382 provides a ligand contact to L-serine.

Belongs to the class-II aminoacyl-tRNA synthetase family. Type-1 seryl-tRNA synthetase subfamily. Homodimer. The tRNA molecule binds across the dimer.

Its subcellular location is the cytoplasm. It carries out the reaction tRNA(Ser) + L-serine + ATP = L-seryl-tRNA(Ser) + AMP + diphosphate + H(+). It catalyses the reaction tRNA(Sec) + L-serine + ATP = L-seryl-tRNA(Sec) + AMP + diphosphate + H(+). It participates in aminoacyl-tRNA biosynthesis; selenocysteinyl-tRNA(Sec) biosynthesis; L-seryl-tRNA(Sec) from L-serine and tRNA(Sec): step 1/1. Its function is as follows. Catalyzes the attachment of serine to tRNA(Ser). Is also able to aminoacylate tRNA(Sec) with serine, to form the misacylated tRNA L-seryl-tRNA(Sec), which will be further converted into selenocysteinyl-tRNA(Sec). In Campylobacter fetus subsp. fetus (strain 82-40), this protein is Serine--tRNA ligase.